The chain runs to 160 residues: Transcription elongation factor GreA (160 aa).

A coiled-coil region spans residues 1–71; it reads MAEKTYPMTL…GQISTLETKI (71 aa).

The protein belongs to the GreA/GreB family.

Its function is as follows. Necessary for efficient RNA polymerase transcription elongation past template-encoded arresting sites. The arresting sites in DNA have the property of trapping a certain fraction of elongating RNA polymerases that pass through, resulting in locked ternary complexes. Cleavage of the nascent transcript by cleavage factors such as GreA or GreB allows the resumption of elongation from the new 3'terminus. GreA releases sequences of 2 to 3 nucleotides. This chain is Transcription elongation factor GreA, found in Streptococcus pyogenes serotype M3 (strain ATCC BAA-595 / MGAS315).